Reading from the N-terminus, the 68-residue chain is MARITTEDCTGKISNHFDLTLVAARRARQLENGNTPLVDDARNNKPTVTALREIAAGHIGTELLTRNK.

It belongs to the RNA polymerase subunit omega family. The RNAP catalytic core consists of 2 alpha, 1 beta, 1 beta' and 1 omega subunit. When a sigma factor is associated with the core the holoenzyme is formed, which can initiate transcription.

It carries out the reaction RNA(n) + a ribonucleoside 5'-triphosphate = RNA(n+1) + diphosphate. Its function is as follows. Promotes RNA polymerase assembly. Latches the N- and C-terminal regions of the beta' subunit thereby facilitating its interaction with the beta and alpha subunits. This chain is DNA-directed RNA polymerase subunit omega, found in Neisseria meningitidis serogroup C (strain 053442).